Consider the following 449-residue polypeptide: Exodeoxyribonuclease 7 large subunit (449 aa).

It belongs to the XseA family. Heterooligomer composed of large and small subunits.

The protein resides in the cytoplasm. The enzyme catalyses Exonucleolytic cleavage in either 5'- to 3'- or 3'- to 5'-direction to yield nucleoside 5'-phosphates.. Bidirectionally degrades single-stranded DNA into large acid-insoluble oligonucleotides, which are then degraded further into small acid-soluble oligonucleotides. This is Exodeoxyribonuclease 7 large subunit from Salmonella agona (strain SL483).